The primary structure comprises 131 residues: MSRRLGAAAAVLLLWLAVLTFAFHGYYGGRLGSARRRNILLQHPALALHLPTRKMLLAVASFDDASSPSSLTTTDRHHHHHRHHGHHHHRGHDRWNRKGVPPTAAGPGEEVDPRFGVQKRLVPTGPNPLHH.

The signal sequence occupies residues 1–22 (MSRRLGAAAAVLLLWLAVLTFA). Residues 67-131 (SPSSLTTTDR…VPTGPNPLHH (65 aa)) are disordered. The segment covering 76–97 (RHHHHHRHHGHHHHRGHDRWNR) has biased composition (basic residues).

The protein belongs to the CLV3/ESR signal peptide family. In terms of tissue distribution, expressed in all aerial apical meristems, including the floral and inflorescence meristems in the reproductive phase and the shoot apical meristem in the vegetative phase. Also detected in the primordia of lateral organs such as the leaf and the floral organs.

It is found in the secreted. Functionally, involved in the maintenance of the floral meristem and of the shoot apical meristem in the vegetative phase. Suppresses the fon2 mutation and acts independently of FON1. In Oryza sativa subsp. japonica, the protein has a single amino acid substitution at the putative processing site of the signal peptide and is inactive. This chain is Protein FON2 SPARE1 (FOS1), found in Oryza sativa subsp. indica (Rice).